The following is a 582-amino-acid chain: Frizzled-10 (582 aa).

An N-terminal signal peptide occupies residues 1–21; sequence MQHPGPRLWLVLQVMIGSCTA. Residues 22–226 lie on the Extracellular side of the membrane; it reads ISSMDLERPG…DVYWSRDDKR (205 aa). Positions 30–151 constitute an FZ domain; it reads PGDGKCQPVE…NDPNYLCMEA (122 aa). Intrachain disulfides connect Cys35–Cys96, Cys43–Cys89, Cys80–Cys118, Cys107–Cys148, and Cys111–Cys135. Asn49 carries an N-linked (GlcNAc...) asparagine glycan. The segment at 153 to 189 is disordered; it reads NNGSDEPSRGSGMFPPLFRPQRPHSAQEHPLKDGGPG. An N-linked (GlcNAc...) asparagine glycan is attached at Asn154. A helical transmembrane segment spans residues 227-247; that stretch reads FAVVWLAIWSVLCFFSSAFTV. The Cytoplasmic segment spans residues 248–263; sequence LTFLIDPSRFRYPERP. Residues 264-284 traverse the membrane as a helical segment; the sequence is IIFLSMCYCVYSVGYIIRLFA. Topologically, residues 285 to 312 are extracellular; sequence GAESIACDRDSGQLYVIQEGLESTGCTL. Residues 313 to 333 form a helical membrane-spanning segment; sequence VFLVLYYFGMASSLWWVVLTL. The Cytoplasmic segment spans residues 334-352; sequence TWFLAAGKKWGHEAIEANS. Residues 353–373 traverse the membrane as a helical segment; sequence SYFHLAAWAIPAVKTILILVM. At 374-394 the chain is on the extracellular side; it reads RRVAGDELTGVCYVGSMDVNA. A helical membrane pass occupies residues 395-415; sequence LTGFVLVPLACYLVIGTSFIL. Residues 416–444 are Cytoplasmic-facing; sequence SGFVALFHIRRVMKTGGENTDKLEKLMVR. The chain crosses the membrane as a helical span at residues 445-465; it reads IGVFSLLYTVPATCVIACYFY. The Extracellular segment spans residues 466 to 503; sequence ERLNMDYWKMLATQHKCKMNNQTKTPDCLMTTSIPAVE. An N-linked (GlcNAc...) asparagine glycan is attached at Asn486. The helical transmembrane segment at 504–524 threads the bilayer; the sequence is VFMVKVSMLLVVGITSGVWVW. Residues 525–582 lie on the Cytoplasmic side of the membrane; the sequence is TSKTLQSWQHVCSRGLKRKSRRKPASVVTSAGIYKKAQHPQKPHLGKYELPAQPSACV. The Lys-Thr-X-X-X-Trp motif, mediates interaction with the PDZ domain of Dvl family members motif lies at 527–532; it reads KTLQSW. The tract at residues 561–582 is disordered; that stretch reads AQHPQKPHLGKYELPAQPSACV. Positions 580-582 match the PDZ-binding motif; sequence ACV.

It belongs to the G-protein coupled receptor Fz/Smo family. Interacts with MYOC. Interacts with WNT7B. In terms of processing, ubiquitinated by ZNRF3, leading to its degradation by the proteasome.

Its subcellular location is the cell membrane. Receptor for Wnt proteins. Functions in the canonical Wnt/beta-catenin signaling pathway. The canonical Wnt/beta-catenin signaling pathway leads to the activation of disheveled proteins, inhibition of GSK-3 kinase, nuclear accumulation of beta-catenin and activation of Wnt target genes. A second signaling pathway involving PKC and calcium fluxes has been seen for some family members, but it is not yet clear if it represents a distinct pathway or if it can be integrated in the canonical pathway, as PKC seems to be required for Wnt-mediated inactivation of GSK-3 kinase. Both pathways seem to involve interactions with G-proteins. May be involved in transduction and intercellular transmission of polarity information during tissue morphogenesis and/or in differentiated tissues. This is Frizzled-10 (Fzd10) from Mus musculus (Mouse).